The following is a 255-amino-acid chain: 3-oxo-5-alpha-steroid 4-dehydrogenase 1 (255 aa).

Helical transmembrane passes span 6–26 (LCLL…AFVG), 82–102 (VLLA…PVLI), 107–127 (PTLL…GYLQ), 142–162 (VTHP…VINI), and 205–225 (FALA…LCAL).

The protein belongs to the steroid 5-alpha reductase family.

The protein resides in the microsome membrane. It is found in the endoplasmic reticulum membrane. It catalyses the reaction a 3-oxo-5alpha-steroid + NADP(+) = a 3-oxo-Delta(4)-steroid + NADPH + H(+). It carries out the reaction 5alpha-pregnane-3,20-dione + NADP(+) = progesterone + NADPH + H(+). The enzyme catalyses 17beta-hydroxy-5alpha-androstan-3-one + NADP(+) = testosterone + NADPH + H(+). The catalysed reaction is androst-4-ene-3,17-dione + NADPH + H(+) = 5alpha-androstan-3,17-dione + NADP(+). Its function is as follows. Converts testosterone into 5-alpha-dihydrotestosterone and progesterone or corticosterone into their corresponding 5-alpha-3-oxosteroids. It plays a central role in sexual differentiation and androgen physiology. The chain is 3-oxo-5-alpha-steroid 4-dehydrogenase 1 from Mus musculus (Mouse).